We begin with the raw amino-acid sequence, 431 residues long: MLDPNLLRNELDAVAEKLLARRGFKLDVETLRKQEERRKVLQVETENLQAERNSRSKEIGAAKARGEDIEPLRREVNTLGEKLDAAKAELDQLQNEIRDLALTIPNLPDDSVPLGKDDTQNQEVTRWGEPRKYDFPVRDHVELGEMAAGLDFAAAVKLTGARFVVMKGQIARLHRALSQFMLDLHTQQHAYQEAYVPYLVNHATLYGTGQLPKFGEDLFHTNPLSEEAESSQYALIPTAEVPLTNLVRDEILDEESLPLKMTAHTPCFRSEAGSYGRDTRGLIRMHQFDKVELVQIVRPEDSMQALEELTTHAETVLQLLKLPYRKVLLCTGDMGFGSTKTYDLEVWLPAQDTYREISSCSNMWDFQARRMQARCRSKSDKKTRLVHTLNGSGLAVGRTLVAVLENYQQADGRIEIPEVLRPYMGGLEFIG.

238-240 (TAE) is a binding site for L-serine. 269 to 271 (RSE) is a binding site for ATP. E292 is an L-serine binding site. An ATP-binding site is contributed by 356 to 359 (EISS). S392 serves as a coordination point for L-serine.

This sequence belongs to the class-II aminoacyl-tRNA synthetase family. Type-1 seryl-tRNA synthetase subfamily. Homodimer. The tRNA molecule binds across the dimer.

Its subcellular location is the cytoplasm. The enzyme catalyses tRNA(Ser) + L-serine + ATP = L-seryl-tRNA(Ser) + AMP + diphosphate + H(+). The catalysed reaction is tRNA(Sec) + L-serine + ATP = L-seryl-tRNA(Sec) + AMP + diphosphate + H(+). It functions in the pathway aminoacyl-tRNA biosynthesis; selenocysteinyl-tRNA(Sec) biosynthesis; L-seryl-tRNA(Sec) from L-serine and tRNA(Sec): step 1/1. In terms of biological role, catalyzes the attachment of serine to tRNA(Ser). Is also able to aminoacylate tRNA(Sec) with serine, to form the misacylated tRNA L-seryl-tRNA(Sec), which will be further converted into selenocysteinyl-tRNA(Sec). The protein is Serine--tRNA ligase of Pectobacterium carotovorum subsp. carotovorum (strain PC1).